The primary structure comprises 227 residues: MNIHRECRSLLSLIQIVSGNLPTGGFSYSKGLESAIEYGWVKSLEDFLNWQKQWIHEQLIYIDWPMLKRCYYYTKINDSKNFKKCALQILSYRDTYELRLEEQRRGKAMEKLISQWYDPISDSWAVAFKCSGLASMAWLGYEWNIPIKNLALGYAYNALESSIMVGLKLLPFGQRTAQKLLRYLVEFLPNAWDKADLVKDHEVGGNFLLQSIASACHEDQYSRLFSS.

The protein belongs to the UreF family. UreD, UreF and UreG form a complex that acts as a GTP-hydrolysis-dependent molecular chaperone, activating the urease apoprotein by helping to assemble the nickel containing metallocenter of UreC. The UreE protein probably delivers the nickel.

The protein resides in the cytoplasm. In terms of biological role, required for maturation of urease via the functional incorporation of the urease nickel metallocenter. The polypeptide is Urease accessory protein UreF (Blochmanniella floridana).